Reading from the N-terminus, the 259-residue chain is MTMPYYASAEQIMRDRSELARKGIARGRSVVVLTFRDGVLFVAENPSTALHKVSELYDRLGFAAVGKYNEFENLRRAGIVHADMRGYSYDRRDVTGRSLANAYAQTLGTIFTEQPKPYEVEICVAEVGRVGSPKAPQLYRITYDGSIVDEQHFVVMGGTTEPIATAMRESYRADLDLEAAVGIAVNALRQGGAGEGEKRNVDVASLEVAVLDQSRPRRAFRRITGPALEQLIPAEPAPASEPAPESKPDTETKPADPQD.

The tract at residues 222-259 (RITGPALEQLIPAEPAPASEPAPESKPDTETKPADPQD) is disordered. Basic and acidic residues predominate over residues 244 to 259 (PESKPDTETKPADPQD).

This sequence belongs to the peptidase T1A family. The 20S proteasome core is composed of 14 alpha and 14 beta subunits that assemble into four stacked heptameric rings, resulting in a barrel-shaped structure. The two inner rings, each composed of seven catalytic beta subunits, are sandwiched by two outer rings, each composed of seven alpha subunits. The catalytic chamber with the active sites is on the inside of the barrel. Has a gated structure, the ends of the cylinder being occluded by the N-termini of the alpha-subunits. Is capped by the proteasome-associated ATPase, ARC.

The protein resides in the cytoplasm. It functions in the pathway protein degradation; proteasomal Pup-dependent pathway. The formation of the proteasomal ATPase ARC-20S proteasome complex, likely via the docking of the C-termini of ARC into the intersubunit pockets in the alpha-rings, may trigger opening of the gate for substrate entry. Interconversion between the open-gate and close-gate conformations leads to a dynamic regulation of the 20S proteasome proteolysis activity. Its function is as follows. Component of the proteasome core, a large protease complex with broad specificity involved in protein degradation. This is Proteasome subunit alpha from Rhodococcus jostii (strain RHA1).